The sequence spans 336 residues: Formimidoylglutamase (336 aa).

Residues histidine 129, aspartate 160, histidine 162, aspartate 164, aspartate 257, and aspartate 259 each contribute to the Mn(2+) site.

This sequence belongs to the arginase family. Mn(2+) is required as a cofactor.

It carries out the reaction N-formimidoyl-L-glutamate + H2O = formamide + L-glutamate. It functions in the pathway amino-acid degradation; L-histidine degradation into L-glutamate; L-glutamate from N-formimidoyl-L-glutamate (hydrolase route): step 1/1. In terms of biological role, catalyzes the conversion of N-formimidoyl-L-glutamate to L-glutamate and formamide. The sequence is that of Formimidoylglutamase from Vibrio vulnificus (strain CMCP6).